Here is a 178-residue protein sequence, read N- to C-terminus: Adenine phosphoribosyltransferase (178 aa).

The protein belongs to the purine/pyrimidine phosphoribosyltransferase family. In terms of assembly, homodimer.

The protein resides in the cytoplasm. The enzyme catalyses AMP + diphosphate = 5-phospho-alpha-D-ribose 1-diphosphate + adenine. The protein operates within purine metabolism; AMP biosynthesis via salvage pathway; AMP from adenine: step 1/1. In terms of biological role, catalyzes a salvage reaction resulting in the formation of AMP, that is energically less costly than de novo synthesis. In Cereibacter sphaeroides (strain KD131 / KCTC 12085) (Rhodobacter sphaeroides), this protein is Adenine phosphoribosyltransferase.